Here is a 929-residue protein sequence, read N- to C-terminus: Isoleucine--tRNA ligase (929 aa).

The 'HIGH' region signature appears at 58–68 (PYANGDIHIGH). E563 provides a ligand contact to L-isoleucyl-5'-AMP. The 'KMSKS' region signature appears at 605 to 609 (KMSKS). K608 contacts ATP. Zn(2+) is bound by residues C892, C895, C912, and C915.

Belongs to the class-I aminoacyl-tRNA synthetase family. IleS type 1 subfamily. Monomer. Requires Zn(2+) as cofactor.

Its subcellular location is the cytoplasm. It carries out the reaction tRNA(Ile) + L-isoleucine + ATP = L-isoleucyl-tRNA(Ile) + AMP + diphosphate. Catalyzes the attachment of isoleucine to tRNA(Ile). As IleRS can inadvertently accommodate and process structurally similar amino acids such as valine, to avoid such errors it has two additional distinct tRNA(Ile)-dependent editing activities. One activity is designated as 'pretransfer' editing and involves the hydrolysis of activated Val-AMP. The other activity is designated 'posttransfer' editing and involves deacylation of mischarged Val-tRNA(Ile). The sequence is that of Isoleucine--tRNA ligase from Neisseria meningitidis serogroup B (strain ATCC BAA-335 / MC58).